The following is a 600-amino-acid chain: Leiomodin-1 (600 aa).

Position 12 is a phosphoserine (Ser12). Disordered regions lie at residues 38–61 (VVDP…QSTG), 80–324 (MQRE…PLER), and 472–573 (DKQR…QEKN). Basic and acidic residues-rich tracts occupy residues 80-127 (MQRE…EPKR), 134-240 (FSRD…EKMK), 247-256 (DMKKEDEKVK), 263-292 (DTKK…KTPE), and 472-497 (DKQR…DLLE). Phosphoserine occurs at positions 85 and 135. Repeat copies occupy residues 165-180 (AAVD…RGEE), 181-196 (RAVA…GSDR), 197-212 (NTGL…EEMK), 213-228 (EVAK…GERR), 229-244 (NTDT…RAGG), 245-260 (NTDM…RGTG), 261-276 (NTDT…KNEP), and 277-293 (LHEK…TPEK). Residues 165-293 (AAVDKKEAGK…DDSKTKTPEK (129 aa)) form an 8 X approximate tandem repeats region. A 5 X 4 AA approximate tandem repeats region spans residues 508-527 (SPKPSPQPSPKPSPKNSPKK). Pro residues-rich tracts occupy residues 510–522 (KPSP…PSPK) and 532–543 (AAPPPPPPPLAP). Ser555 is modified (phosphoserine). The WH2 domain maps to 574–593 (SRDQLLAAIRSSNLKQLKKV).

The protein belongs to the tropomodulin family. As to expression, detected in lung vascular smooth muscle (at protein level). Detected in thyroid and extraocular smooth muscle, but not skeletal muscle. Detected in heart, aorta, skeletal muscle, colon, urinary bladder, uterus, stomach, and small intestine.

The protein resides in the cytoplasm. Its subcellular location is the myofibril. The protein localises to the sarcomere. It localises to the cytoskeleton. Required for proper contractility of visceral smooth muscle cells. Mediates nucleation of actin filaments. This is Leiomodin-1 (LMOD1) from Homo sapiens (Human).